Consider the following 126-residue polypeptide: UPF0538 protein C2orf76 homolog (126 aa).

Belongs to the UPF0538 family.

The protein is UPF0538 protein C2orf76 homolog of Xenopus tropicalis (Western clawed frog).